Consider the following 1712-residue polypeptide: Probable ATP-dependent RNA helicase DDX60 (1712 aa).

One can recognise a Helicase ATP-binding domain in the interval 772–939; it reads LDVVDKNESA…WLQSVKWYWK (168 aa). Residue 785–792 coordinates ATP; that stretch reads APTSSGKT. The short motif at 889 to 892 is the DEVH box element; it reads DEVH. The region spanning 1226-1370 is the Helicase C-terminal domain; the sequence is YADQKAVDTE…HFPLSITLVL (145 aa).

Belongs to the helicase family. As to quaternary structure, interacts with EXOSC1, EXOSC4, RIGI, IFIH1/MDA5 and DHX58/LGP2. As to expression, brain, lymph node, prostate, stomach, thyroid, tongue, trachea, uterus, skeletal muscle, spleen, kidney, liver and small intestine.

The protein resides in the cytoplasm. The enzyme catalyses ATP + H2O = ADP + phosphate + H(+). In terms of biological role, positively regulates RIGI- and IFIH1/MDA5-dependent type I interferon and interferon inducible gene expression in response to viral infection. Binds ssRNA, dsRNA and dsDNA and can promote the binding of RIGI to dsRNA. Exhibits antiviral activity against hepatitis C virus and vesicular stomatitis virus (VSV). The polypeptide is Probable ATP-dependent RNA helicase DDX60 (DDX60) (Homo sapiens (Human)).